A 355-amino-acid polypeptide reads, in one-letter code: Alanine racemase (355 aa).

K37 serves as the catalytic Proton acceptor; specific for D-alanine. Position 37 is an N6-(pyridoxal phosphate)lysine (K37). Substrate is bound at residue R129. The active-site Proton acceptor; specific for L-alanine is Y251. Residue M299 coordinates substrate.

It belongs to the alanine racemase family. Pyridoxal 5'-phosphate serves as cofactor.

It catalyses the reaction L-alanine = D-alanine. Its pathway is amino-acid biosynthesis; D-alanine biosynthesis; D-alanine from L-alanine: step 1/1. Its function is as follows. Catalyzes the interconversion of L-alanine and D-alanine. May also act on other amino acids. This Deinococcus geothermalis (strain DSM 11300 / CIP 105573 / AG-3a) protein is Alanine racemase (alr).